The following is a 140-amino-acid chain: Putative transcription elongation factor S-II-like protein 349L (140 aa).

A TFIIS-type zinc finger spans residues 100–139; it reads GAIKCKCGSERVFSFSKQTRSGDESTSVFALCSSCKSKWV. Cys104, Cys106, Cys131, and Cys134 together coordinate Zn(2+).

It belongs to the IIV-6 349L family.

This Acheta domesticus (House cricket) protein is Putative transcription elongation factor S-II-like protein 349L.